Reading from the N-terminus, the 292-residue chain is 11-beta-hydroxysteroid dehydrogenase 1 (292 aa).

Topologically, residues 2-7 are cytoplasmic; the sequence is AFMKKY. The chain crosses the membrane as a helical; Signal-anchor for type II membrane protein span at residues 8–24; the sequence is LLPLLGLFLAYYYYSAN. Residues 25–292 lie on the Lumenal side of the membrane; the sequence is EEFRPEMLQG…KFDISKLVNN (268 aa). Residues 41–67, 92–93, and 119–121 contribute to the NADP(+) site; these read GASK…TARS, TM, and NHI. N-linked (GlcNAc...) asparagine glycans are attached at residues Asn123 and Asn162. Ser170 contributes to the substrate binding site. Tyr183 (proton acceptor) is an active-site residue. An NADP(+)-binding site is contributed by 183 to 187; that stretch reads YSASK. N-linked (GlcNAc...) asparagine glycosylation is present at Asn207. 218 to 222 is a binding site for NADP(+); sequence IDTDT.

Belongs to the short-chain dehydrogenases/reductases (SDR) family. Homodimer. In terms of processing, glycosylated. Expressed in the eye.

Its subcellular location is the endoplasmic reticulum membrane. It is found in the microsome membrane. The catalysed reaction is an 11beta-hydroxysteroid + NADP(+) = an 11-oxosteroid + NADPH + H(+). The enzyme catalyses corticosterone + NADP(+) = 11-dehydrocorticosterone + NADPH + H(+). It catalyses the reaction cortisone + NADPH + H(+) = cortisol + NADP(+). It carries out the reaction a 7beta-hydroxysteroid + NADP(+) = a 7-oxosteroid + NADPH + H(+). The catalysed reaction is 7-oxocholesterol + NADPH + H(+) = 7beta-hydroxycholesterol + NADP(+). The enzyme catalyses chenodeoxycholate + NADP(+) = 7-oxolithocholate + NADPH + H(+). It catalyses the reaction 7-oxolithocholate + NADPH + H(+) = ursodeoxycholate + NADP(+). It carries out the reaction glycochenodeoxycholate + NADP(+) = 7-oxoglycolithocholate + NADPH + H(+). The catalysed reaction is taurochenodeoxycholate + NADP(+) = 7-oxotaurolithocholate + NADPH + H(+). The enzyme catalyses tauroursodeoxycholate + NADP(+) = 7-oxotaurolithocholate + NADPH + H(+). It catalyses the reaction glycoursodeoxycholate + NADP(+) = 7-oxoglycolithocholate + NADPH + H(+). It carries out the reaction 7-oxopregnenolone + NADPH + H(+) = 7beta-hydroxypregnenolone + NADP(+). The catalysed reaction is 3beta,7alpha-dihydroxyandrost-5-en-17-one + NADP(+) = 3beta-hydroxy-5-androstene-7,17-dione + NADPH + H(+). The enzyme catalyses 3beta-hydroxy-5-androstene-7,17-dione + NADPH + H(+) = 3beta,7beta-dihydroxyandrost-5-en-17-one + NADP(+). It catalyses the reaction 3beta-hydroxy-5alpha-androstane-7,17-dione + NADPH + H(+) = 3beta,7beta-dihydroxy-5alpha-androstan-17-one + NADP(+). Its pathway is steroid metabolism. Controls the reversible conversion of biologically active glucocorticoids such as cortisone to cortisol, and 11-dehydrocorticosterone to corticosterone in the presence of NADP(H). Participates in the corticosteroid receptor-mediated anti-inflammatory response, as well as metabolic and homeostatic processes. Plays a role in the secretion of aqueous humor in the eye, maintaining a normotensive, intraocular environment. Bidirectional in vitro, predominantly functions as a reductase in vivo, thereby increasing the concentration of active glucocorticoids. It has broad substrate specificity, besides glucocorticoids, it accepts other steroid and sterol substrates. It has broad substrate specificity, besides glucocorticoids, it accepts other steroid and sterol substrates. Interconverts 7-oxo- and 7-hydroxy-neurosteroids such as 7-oxopregnenolone and 7beta-hydroxypregnenolone, 7-oxodehydroepiandrosterone (3beta-hydroxy-5-androstene-7,17-dione) and 7beta-hydroxydehydroepiandrosterone (3beta,7beta-dihydroxyandrost-5-en-17-one), among others. Catalyzes the stereo-specific conversion of the major dietary oxysterol, 7-ketocholesterol (7-oxocholesterol), into the more polar 7-beta-hydroxycholesterol metabolite. 7-oxocholesterol is one of the most important oxysterols, it participates in several events such as induction of apoptosis, accumulation in atherosclerotic lesions, lipid peroxidation, and induction of foam cell formation. Mediates the 7-oxo reduction of 7-oxolithocholate mainly to chenodeoxycholate, and to a lesser extent to ursodeoxycholate, both in its free form and when conjugated to glycine or taurine, providing a link between glucocorticoid activation and bile acid metabolism. Catalyzes the synthesis of 7-beta-25-dihydroxycholesterol from 7-oxo-25-hydroxycholesterol in vitro, which acts as a ligand for the G-protein-coupled receptor (GPCR) Epstein-Barr virus-induced gene 2 (EBI2) and may thereby regulate immune cell migration. This chain is 11-beta-hydroxysteroid dehydrogenase 1, found in Oryctolagus cuniculus (Rabbit).